We begin with the raw amino-acid sequence, 200 residues long: MYAYFRGRVVSVLPEEAVLEVSGIAYRFLISTGTSRSLPQAGNEAILYTHLSVREDALQLYGFSSEEEKQLFRLLLLVSGVGPKLALAVLSGLPVAEVHEAILANAPERLFGVTGVGRKTAARIILELRDRILKLSPPGAAATPAGAVQCGIREDATNALLTLGFSRTAAQQAVAGVLEANPGGSVEDVVKSALLAMHNR.

Positions 1 to 64 (MYAYFRGRVV…EDALQLYGFS (64 aa)) are domain I. The tract at residues 65-143 (SEEEKQLFRL…KLSPPGAAAT (79 aa)) is domain II. The segment at 144–154 (PAGAVQCGIRE) is flexible linker. The tract at residues 154–200 (EDATNALLTLGFSRTAAQQAVAGVLEANPGGSVEDVVKSALLAMHNR) is domain III.

It belongs to the RuvA family. Homotetramer. Forms an RuvA(8)-RuvB(12)-Holliday junction (HJ) complex. HJ DNA is sandwiched between 2 RuvA tetramers; dsDNA enters through RuvA and exits via RuvB. An RuvB hexamer assembles on each DNA strand where it exits the tetramer. Each RuvB hexamer is contacted by two RuvA subunits (via domain III) on 2 adjacent RuvB subunits; this complex drives branch migration. In the full resolvosome a probable DNA-RuvA(4)-RuvB(12)-RuvC(2) complex forms which resolves the HJ.

Its subcellular location is the cytoplasm. Functionally, the RuvA-RuvB-RuvC complex processes Holliday junction (HJ) DNA during genetic recombination and DNA repair, while the RuvA-RuvB complex plays an important role in the rescue of blocked DNA replication forks via replication fork reversal (RFR). RuvA specifically binds to HJ cruciform DNA, conferring on it an open structure. The RuvB hexamer acts as an ATP-dependent pump, pulling dsDNA into and through the RuvAB complex. HJ branch migration allows RuvC to scan DNA until it finds its consensus sequence, where it cleaves and resolves the cruciform DNA. This chain is Holliday junction branch migration complex subunit RuvA, found in Chlorobium luteolum (strain DSM 273 / BCRC 81028 / 2530) (Pelodictyon luteolum).